The following is a 231-amino-acid chain: Flagellar L-ring protein (231 aa).

An N-terminal signal peptide occupies residues 1 to 18; it reads MKRFVSVVALSGVVSLAG. Cys19 is lipidated: N-palmitoyl cysteine. Cys19 is lipidated: S-diacylglycerol cysteine.

The protein belongs to the FlgH family. In terms of assembly, the basal body constitutes a major portion of the flagellar organelle and consists of four rings (L,P,S, and M) mounted on a central rod.

Its subcellular location is the cell outer membrane. It localises to the bacterial flagellum basal body. Assembles around the rod to form the L-ring and probably protects the motor/basal body from shearing forces during rotation. The protein is Flagellar L-ring protein of Pseudomonas fluorescens (strain Pf0-1).